The chain runs to 435 residues: NADH-quinone oxidoreductase subunit D (435 aa).

This sequence belongs to the complex I 49 kDa subunit family. As to quaternary structure, NDH-1 is composed of 14 different subunits. Subunits NuoB, C, D, E, F, and G constitute the peripheral sector of the complex.

It is found in the cell inner membrane. It carries out the reaction a quinone + NADH + 5 H(+)(in) = a quinol + NAD(+) + 4 H(+)(out). In terms of biological role, NDH-1 shuttles electrons from NADH, via FMN and iron-sulfur (Fe-S) centers, to quinones in the respiratory chain. The immediate electron acceptor for the enzyme in this species is believed to be ubiquinone. Couples the redox reaction to proton translocation (for every two electrons transferred, four hydrogen ions are translocated across the cytoplasmic membrane), and thus conserves the redox energy in a proton gradient. In Xanthomonas oryzae pv. oryzae (strain MAFF 311018), this protein is NADH-quinone oxidoreductase subunit D.